A 181-amino-acid chain; its full sequence is HGPRTase-like protein 2 (181 aa).

Belongs to the purine/pyrimidine phosphoribosyltransferase family. Archaeal HPRT subfamily.

Its function is as follows. May catalyze a purine salvage reaction, the substrate is unknown. The polypeptide is HGPRTase-like protein 2 (Haloterrigena turkmenica (strain ATCC 51198 / DSM 5511 / JCM 9101 / NCIMB 13204 / VKM B-1734 / 4k) (Halococcus turkmenicus)).